The chain runs to 398 residues: 1-aminocyclopropane-1-carboxylate oxidase homolog 5 (398 aa).

One can recognise a Fe2OG dioxygenase domain in the interval 247-347 (KSHIMFGQYY…RISMPCFVST (101 aa)). Fe cation is bound by residues H271, D273, and H327. R338 contributes to the 2-oxoglutarate binding site.

It belongs to the iron/ascorbate-dependent oxidoreductase family. The cofactor is Fe(2+). As to expression, expressed in etiolated seedlings, leaves, stems and flowers.

The protein is 1-aminocyclopropane-1-carboxylate oxidase homolog 5 (2A6) of Arabidopsis thaliana (Mouse-ear cress).